The sequence spans 149 residues: Small ribosomal subunit protein uS13 (149 aa).

Belongs to the universal ribosomal protein uS13 family. As to quaternary structure, part of the 30S ribosomal subunit. Forms a loose heterodimer with protein S19. Forms two bridges to the 50S subunit in the 70S ribosome.

Its function is as follows. Located at the top of the head of the 30S subunit, it contacts several helices of the 16S rRNA. In the 70S ribosome it contacts the 23S rRNA (bridge B1a) and protein L5 of the 50S subunit (bridge B1b), connecting the 2 subunits; these bridges are implicated in subunit movement. The sequence is that of Small ribosomal subunit protein uS13 from Methanococcus maripaludis (strain DSM 14266 / JCM 13030 / NBRC 101832 / S2 / LL).